A 232-amino-acid chain; its full sequence is Orotidine 5'-phosphate decarboxylase (232 aa).

Residues aspartate 11, lysine 33, 60-69 (DLKFHDIPHT), threonine 119, arginine 180, glutamine 189, glycine 209, and arginine 210 each bind substrate. Lysine 62 (proton donor) is an active-site residue.

The protein belongs to the OMP decarboxylase family. Type 1 subfamily. In terms of assembly, homodimer.

The catalysed reaction is orotidine 5'-phosphate + H(+) = UMP + CO2. The protein operates within pyrimidine metabolism; UMP biosynthesis via de novo pathway; UMP from orotate: step 2/2. Catalyzes the decarboxylation of orotidine 5'-monophosphate (OMP) to uridine 5'-monophosphate (UMP). The polypeptide is Orotidine 5'-phosphate decarboxylase (Nitrosococcus oceani (strain ATCC 19707 / BCRC 17464 / JCM 30415 / NCIMB 11848 / C-107)).